The sequence spans 333 residues: Foldase protein PrsA (333 aa).

An N-terminal signal peptide occupies residues 1 to 22 (MKKSTKLLAGIVTLASAMTLAA). Residue cysteine 23 is the site of N-palmitoyl cysteine attachment. Residue cysteine 23 is the site of S-diacylglycerol cysteine attachment. One can recognise a PpiC domain in the interval 145-240 (TPEMTTQVIT…NKFYIVKVTK (96 aa)). A disordered region spans residues 301-333 (DKKASKANTSKSDQKTSSDSSKDSQSSKSKSEK). Residues 312–322 (SDQKTSSDSSK) are compositionally biased toward basic and acidic residues. A compositionally biased stretch (low complexity) spans 323 to 333 (DSQSSKSKSEK).

This sequence belongs to the PrsA family.

The protein resides in the cell membrane. The catalysed reaction is [protein]-peptidylproline (omega=180) = [protein]-peptidylproline (omega=0). Functionally, plays a major role in protein secretion by helping the post-translocational extracellular folding of several secreted proteins. This chain is Foldase protein PrsA, found in Streptococcus equi subsp. zooepidemicus (strain MGCS10565).